We begin with the raw amino-acid sequence, 207 residues long: Pyrrolidone-carboxylate peptidase (207 aa).

Residues Glu-80, Cys-143, and His-167 contribute to the active site.

It belongs to the peptidase C15 family. As to quaternary structure, homotetramer.

The protein localises to the cytoplasm. It carries out the reaction Release of an N-terminal pyroglutamyl group from a polypeptide, the second amino acid generally not being Pro.. In terms of biological role, removes 5-oxoproline from various penultimate amino acid residues except L-proline. This Coprothermobacter proteolyticus (strain ATCC 35245 / DSM 5265 / OCM 4 / BT) protein is Pyrrolidone-carboxylate peptidase.